Here is a 576-residue protein sequence, read N- to C-terminus: MIALPVEKAPRKSLWQRHRAFISGIVALIIIGTFFLTSGLHPAPPHEAKRPHHGKGPMHSPKCEKIEPLSPSFKHSVDTILHDPAFRNSSIEKLSNAVRIPTVVQDKNPNPADDPDFYKHFYELHDYFEKTFPNIHKHLKLEKVNELGLLYTWEGSDPDLKPLLLMAHQDVVPVNNETLSSWKFPPFSGHYDPETDFVWGRGSNDCKNLLIAEFEAIEQLLIDGFKPNRTIVMSLGFDEEASGTLGAASLASFLHERYGDDGIYSIIDEGEGIMEVDKDVFVATPINAEKGYVDFEVSILGHGGHSSVPPDHTTIGIASELITEFEANPFDYEFEFDNPIYGLLTCAAEHSKSLSKDVKKTILGAPFCPRRKDKLVEYISNQSHLRSLIRTTQAVDIINGGVKANALPETTRFLINHRINLHSSVAEVFERNIEYAKKIAEKYGYGLSKNGDDYIIPETELGHIDITLLRELEPAPLSPSSGPVWDILAGTIQDVFENGVLQNNEEFYVTTGLFSGNTDTKYYWNLSKNIYRFVGSIIDIDLLKTLHSVNEHVDVPGHLSAIAFVYEYIVNVNEYA.

Topologically, residues 1 to 19 (MIALPVEKAPRKSLWQRHR) are cytoplasmic. Lys-8 is covalently cross-linked (Glycyl lysine isopeptide (Lys-Gly) (interchain with G-Cter in ubiquitin)). The chain crosses the membrane as a helical span at residues 20-40 (AFISGIVALIIIGTFFLTSGL). The Lumenal portion of the chain corresponds to 41 to 576 (HPAPPHEAKR…EYIVNVNEYA (536 aa)). The tract at residues 44 to 65 (PPHEAKRPHHGKGPMHSPKCEK) is disordered. Asn-88 is a glycosylation site (N-linked (GlcNAc...) asparagine). Residue His-168 coordinates Zn(2+). The active site involves Asp-170. Residue Asn-176 is glycosylated (N-linked (GlcNAc...) asparagine). A Zn(2+)-binding site is contributed by Asp-205. The N-linked (GlcNAc...) asparagine glycan is linked to Asn-228. Glu-239 functions as the Proton acceptor in the catalytic mechanism. Residues Glu-240 and Asp-268 each contribute to the Zn(2+) site. N-linked (GlcNAc...) asparagine glycans are attached at residues Asn-381 and Asn-525. Residue His-547 coordinates Zn(2+).

It belongs to the peptidase M20A family. In terms of assembly, yscS is synthesized as one polypeptide chain precursor which after carbohydrate modification in the secretory pathway yields two active precursor molecules. The proteolytically unprocessed forms are associated with the membrane, whereas the mature forms of the enzyme are soluble. Requires Zn(2+) as cofactor. In terms of processing, glycosylated. Ubiquitinated. Ubiquitination mediates sorting into internal vesicles in late endosomes. TUL1 is required for ubiquitination.

It is found in the vacuole membrane. It catalyses the reaction Release of a C-terminal amino acid from a peptide in which glycine is the penultimate amino acid, e.g. Z-Gly-|-Leu.. Necessary for use of certain peptides as sole nitrogen source. May also cleave intracellularly generated peptides to recycle amino acids for protein synthesis. The chain is Carboxypeptidase S (CPS1) from Saccharomyces cerevisiae (strain ATCC 204508 / S288c) (Baker's yeast).